The chain runs to 357 residues: Chorismate synthase (357 aa).

NADP(+) is bound at residue R46. FMN-binding positions include 123-125 (RSS), 235-236 (NA), G275, 290-294 (KPTPS), and R316.

It belongs to the chorismate synthase family. Homotetramer. FMNH2 serves as cofactor.

It catalyses the reaction 5-O-(1-carboxyvinyl)-3-phosphoshikimate = chorismate + phosphate. Its pathway is metabolic intermediate biosynthesis; chorismate biosynthesis; chorismate from D-erythrose 4-phosphate and phosphoenolpyruvate: step 7/7. Catalyzes the anti-1,4-elimination of the C-3 phosphate and the C-6 proR hydrogen from 5-enolpyruvylshikimate-3-phosphate (EPSP) to yield chorismate, which is the branch point compound that serves as the starting substrate for the three terminal pathways of aromatic amino acid biosynthesis. This reaction introduces a second double bond into the aromatic ring system. The protein is Chorismate synthase of Nitratiruptor sp. (strain SB155-2).